A 234-amino-acid chain; its full sequence is Purine nucleoside phosphorylase DeoD-type (234 aa).

Histidine 5 contributes to the a purine D-ribonucleoside binding site. Residues glycine 21, arginine 25, arginine 44, and arginine 88–serine 91 each bind phosphate. A purine D-ribonucleoside contacts are provided by residues glutamate 180 to glutamate 182 and serine 204 to aspartate 205. Catalysis depends on aspartate 205, which acts as the Proton donor.

This sequence belongs to the PNP/UDP phosphorylase family. Homohexamer; trimer of homodimers.

It catalyses the reaction a purine D-ribonucleoside + phosphate = a purine nucleobase + alpha-D-ribose 1-phosphate. The enzyme catalyses a purine 2'-deoxy-D-ribonucleoside + phosphate = a purine nucleobase + 2-deoxy-alpha-D-ribose 1-phosphate. Its function is as follows. Catalyzes the reversible phosphorolytic breakdown of the N-glycosidic bond in the beta-(deoxy)ribonucleoside molecules, with the formation of the corresponding free purine bases and pentose-1-phosphate. In Colwellia psychrerythraea (strain 34H / ATCC BAA-681) (Vibrio psychroerythus), this protein is Purine nucleoside phosphorylase DeoD-type.